A 357-amino-acid polypeptide reads, in one-letter code: uncharacterized protein (357 aa).

Position 72 is a phosphoserine (serine 72). Disordered stretches follow at residues 79–98 (GVNE…RPSR), 264–290 (QKQL…GASV), and 323–357 (ISDE…EPLK). Over residues 324 to 335 (SDEDEEDEEEDS) the composition is skewed to acidic residues.

This is an uncharacterized protein from Saccharomyces cerevisiae (strain ATCC 204508 / S288c) (Baker's yeast).